Reading from the N-terminus, the 157-residue chain is 2-C-methyl-D-erythritol 2,4-cyclodiphosphate synthase (157 aa).

Residues Asp-8 and His-10 each contribute to the a divalent metal cation site. 4-CDP-2-C-methyl-D-erythritol 2-phosphate-binding positions include 8-10 and 34-35; these read DVH and HS. His-42 lines the a divalent metal cation pocket. Residues 56–58, 61–65, 132–135, Phe-139, and Arg-142 each bind 4-CDP-2-C-methyl-D-erythritol 2-phosphate; these read DIG, FPDSD, and TTTE.

The protein belongs to the IspF family. Homotrimer. A divalent metal cation is required as a cofactor.

The enzyme catalyses 4-CDP-2-C-methyl-D-erythritol 2-phosphate = 2-C-methyl-D-erythritol 2,4-cyclic diphosphate + CMP. Its pathway is isoprenoid biosynthesis; isopentenyl diphosphate biosynthesis via DXP pathway; isopentenyl diphosphate from 1-deoxy-D-xylulose 5-phosphate: step 4/6. Its function is as follows. Involved in the biosynthesis of isopentenyl diphosphate (IPP) and dimethylallyl diphosphate (DMAPP), two major building blocks of isoprenoid compounds. Catalyzes the conversion of 4-diphosphocytidyl-2-C-methyl-D-erythritol 2-phosphate (CDP-ME2P) to 2-C-methyl-D-erythritol 2,4-cyclodiphosphate (ME-CPP) with a corresponding release of cytidine 5-monophosphate (CMP). This Syntrophomonas wolfei subsp. wolfei (strain DSM 2245B / Goettingen) protein is 2-C-methyl-D-erythritol 2,4-cyclodiphosphate synthase.